The chain runs to 1010 residues: Retinoblastoma-related protein 1 (1010 aa).

Residues 1–23 (MEGAAPPASSGSEVTGAGSGKVD) are disordered. Positions 419–619 (TPVSTAMTTA…EKGSSMYNSL (201 aa)) are domain A. Positions 419-861 (TPVSTAMTTA…NEVFIPTVKP (443 aa)) are pocket. Residues 620-730 (IVARPTLSAE…PAAGGELCAE (111 aa)) are spacer. Residues 657-679 (LPPLPFQKQEHSPDKDEVRSPKR) are disordered. Residues 664-679 (KQEHSPDKDEVRSPKR) are compositionally biased toward basic and acidic residues. The segment at 731 to 861 (TGIGVFLSKI…NEVFIPTVKP (131 aa)) is domain B. Positions 868 to 898 (SGTSPNKKNEEKCAADGPYPESPRLSRFPNL) are disordered.

This sequence belongs to the retinoblastoma protein (RB) family.

Its subcellular location is the nucleus. Regulator of biological processes that recruits a histone deacetylase to control gene transcription. May play a role in the entry into mitosis, negatively regulating the cell proliferation. Formation of stable complexes with geminiviridae replication-associated proteins may create a cellular environment which favors viral DNA replication. This chain is Retinoblastoma-related protein 1 (RBR1), found in Oryza sativa subsp. japonica (Rice).